Reading from the N-terminus, the 23-residue chain is Coenzyme PQQ synthesis protein A (23 aa).

The pyrroloquinoline quinone (Glu-Tyr) cross-link spans 15-19 (EVTMY).

This sequence belongs to the PqqA family.

The protein operates within cofactor biosynthesis; pyrroloquinoline quinone biosynthesis. In terms of biological role, required for coenzyme pyrroloquinoline quinone (PQQ) biosynthesis. PQQ is probably formed by cross-linking a specific glutamate to a specific tyrosine residue and excising these residues from the peptide. The protein is Coenzyme PQQ synthesis protein A of Ectopseudomonas mendocina (strain ymp) (Pseudomonas mendocina).